The primary structure comprises 115 residues: Ribonuclease P protein component (115 aa).

This sequence belongs to the RnpA family. Consists of a catalytic RNA component (M1 or rnpB) and a protein subunit.

It carries out the reaction Endonucleolytic cleavage of RNA, removing 5'-extranucleotides from tRNA precursor.. Functionally, RNaseP catalyzes the removal of the 5'-leader sequence from pre-tRNA to produce the mature 5'-terminus. It can also cleave other RNA substrates such as 4.5S RNA. The protein component plays an auxiliary but essential role in vivo by binding to the 5'-leader sequence and broadening the substrate specificity of the ribozyme. The protein is Ribonuclease P protein component of Natranaerobius thermophilus (strain ATCC BAA-1301 / DSM 18059 / JW/NM-WN-LF).